The primary structure comprises 216 residues: Oligoribonuclease (216 aa).

An Exonuclease domain is found at 6 to 171 (VVWMDCEMTG…ADIKESIREL (166 aa)). Y128 is an active-site residue.

It belongs to the oligoribonuclease family.

Its subcellular location is the cytoplasm. 3'-to-5' exoribonuclease specific for small oligoribonucleotides. This chain is Oligoribonuclease, found in Nocardia farcinica (strain IFM 10152).